The following is a 360-amino-acid chain: Phospho-N-acetylmuramoyl-pentapeptide-transferase (360 aa).

10 helical membrane-spanning segments follow: residues Tyr21–Gly41, Thr73–Leu93, Val98–Trp118, Trp132–Gly152, Phe168–Ser188, Gly199–Thr219, Ala236–Tyr256, Val263–Leu283, Leu288–Val308, and Val338–Lys358.

Belongs to the glycosyltransferase 4 family. MraY subfamily. Requires Mg(2+) as cofactor.

It is found in the cell inner membrane. It carries out the reaction UDP-N-acetyl-alpha-D-muramoyl-L-alanyl-gamma-D-glutamyl-meso-2,6-diaminopimeloyl-D-alanyl-D-alanine + di-trans,octa-cis-undecaprenyl phosphate = di-trans,octa-cis-undecaprenyl diphospho-N-acetyl-alpha-D-muramoyl-L-alanyl-D-glutamyl-meso-2,6-diaminopimeloyl-D-alanyl-D-alanine + UMP. It participates in cell wall biogenesis; peptidoglycan biosynthesis. Catalyzes the initial step of the lipid cycle reactions in the biosynthesis of the cell wall peptidoglycan: transfers peptidoglycan precursor phospho-MurNAc-pentapeptide from UDP-MurNAc-pentapeptide onto the lipid carrier undecaprenyl phosphate, yielding undecaprenyl-pyrophosphoryl-MurNAc-pentapeptide, known as lipid I. In Actinobacillus pleuropneumoniae serotype 3 (strain JL03), this protein is Phospho-N-acetylmuramoyl-pentapeptide-transferase.